We begin with the raw amino-acid sequence, 403 residues long: MKIERAYTIVTAPGRNFVTLKIVTDEGTYGIGDATLNGREMAVVAYLEEHVIPALIGRDPQRIEDIWHYLYRGAYWRRGPVTMSAIGAVDMALWDIKAKVAGMPLYQLLGGKSRERVMVYGHATGKDIEACLDEVARHVEEGYRAVRVQAGVPGIASIYGVAKKPGERYEPADAELPAEHVWNTAKYLNHAPKLFAAVRERFGDDLHVLHDVHHRLTPIEAARLGKEVEPFNLFWLEDCVPAENQESFGLIRQHTTTPLAVGEVFNSLYDAKALIENQWIDYIRAPLTHAGGITHVRRLADLAGLYHVRTGFHGPTDLSPVCLGAAIHFDTWVPNFGIQEYMPHEAVTDEVFPHDYRFEDGHFLVGETPGHGVDIDEEKARKYPYRRASLPVNRLEDGTLWHW.

Residues Asn-37 and His-122 each contribute to the substrate site. Tyr-159 functions as the Proton donor/acceptor in the catalytic mechanism. Asp-211 contacts Mg(2+). His-213 functions as the Proton donor/acceptor in the catalytic mechanism. The Mg(2+) site is built by Glu-237 and Glu-263. Positions 263, 284, 313, 317, and 340 each coordinate substrate.

This sequence belongs to the mandelate racemase/muconate lactonizing enzyme family. GalD subfamily. The cofactor is Mg(2+).

It carries out the reaction D-mannonate = 2-dehydro-3-deoxy-D-gluconate + H2O. The catalysed reaction is D-gluconate = 2-dehydro-3-deoxy-D-gluconate + H2O. Functionally, has low dehydratase activity with D-mannonate and D-gluconate, suggesting that these are not physiological substrates and that it has no significant role in the in vivo degradation of these compounds. Has no detectable activity with a panel of 70 other acid sugars (in vitro). In Halomonas elongata (strain ATCC 33173 / DSM 2581 / NBRC 15536 / NCIMB 2198 / 1H9), this protein is D-galactonate dehydratase family member RspA (rspA).